We begin with the raw amino-acid sequence, 317 residues long: MPHTLPETELHNPQSTKPPLDPHLKALENEAIHIFREVAAEFERPVMLYSIGKDSSVLLHLARKAFYPGRIPFPLLHVDTGWKFREMIAFRDEMVAKYDLDLVAHTNPRGAAENVTPFTHGSALYTDIMKTEALRQALDAGQYDAAFGGARRDEEASRAKERIYSFRTPDHRWDPRNQRPELWNVYNGMIRKGESVRAFPLSNWTEVDIWRYIQAEDIPIVPLYFAKKRPVVERDGMLILAEDPRLELLPGEVKREEVIRFRTLGCFPLTGAIRSEADTLDDIIAELETATVSERQGRAIDRDQAGSMEKKKREGYF.

The segment covering 1-10 has biased composition (basic and acidic residues); it reads MPHTLPETEL. 2 disordered regions span residues 1-21 and 295-317; these read MPHT…PPLD and RQGR…EGYF.

This sequence belongs to the PAPS reductase family. CysD subfamily. As to quaternary structure, heterodimer composed of CysD, the smaller subunit, and CysN.

It carries out the reaction sulfate + ATP + H(+) = adenosine 5'-phosphosulfate + diphosphate. The protein operates within sulfur metabolism; hydrogen sulfide biosynthesis; sulfite from sulfate: step 1/3. Functionally, with CysN forms the ATP sulfurylase (ATPS) that catalyzes the adenylation of sulfate producing adenosine 5'-phosphosulfate (APS) and diphosphate, the first enzymatic step in sulfur assimilation pathway. APS synthesis involves the formation of a high-energy phosphoric-sulfuric acid anhydride bond driven by GTP hydrolysis by CysN coupled to ATP hydrolysis by CysD. This is Sulfate adenylyltransferase subunit 2 (cysD) from Rhizobium meliloti (strain 1021) (Ensifer meliloti).